The primary structure comprises 190 residues: LOB domain-containing protein 1 (190 aa).

Polar residues predominate over residues 1-11 (MESKSDASVAT). A disordered region spans residues 1–27 (MESKSDASVATTPIISSSSSPPPSLSP). The region spanning 32 to 133 (SPCAACKILR…AQLAKAQVEM (102 aa)) is the LOB domain.

Belongs to the LOB domain-containing protein family. In terms of tissue distribution, expressed in young shoots, roots, stems, leaves and flowers.

In Arabidopsis thaliana (Mouse-ear cress), this protein is LOB domain-containing protein 1 (LBD1).